Here is a 398-residue protein sequence, read N- to C-terminus: MVQRNAPKKAVHFGAGNIGRGFVACFLHNSGYEVIFAEVNDTTVQKLNSQKSYKVIEVGADGTSESTITNYRAINSRLNEAELVQEIATADLVTCSVGPHILKFLAPVIAKGIDARSTDLTPVAVIACENAIGATDTLAEFIKAPENTNPDRLADYDKRARFANSAIDRIVPAQDPDAGLDVRLEKFYEWVVERTPFADHEPPAVEGIHWVDNLQPFIERKLYTVNTGHATAAYHGYIRRKSTVYDALQDREIQEEVKKALANTASLITQKHGIPQDEQQAYVDKIVRRISNPHLEDAVERVGRAPLRKLSRKERFIGPAAELAEHGKDCGALLDAAEMAFRFQNVEGDDESFKLAEIMEQNGPEDVVKQVCGLEPKEKLFPAVVDVVKRVQADTQSD.

Residue 10–21 (AVHFGAGNIGRG) participates in NAD(+) binding. Lys-221 is an active-site residue.

The protein belongs to the mannitol dehydrogenase family. As to quaternary structure, monomer.

It catalyses the reaction D-mannitol 1-phosphate + NAD(+) = beta-D-fructose 6-phosphate + NADH + H(+). Its function is as follows. Catalyzes the NAD(H)-dependent interconversion of D-fructose 6-phosphate and D-mannitol 1-phosphate in the mannitol metabolic pathway. The chain is Mannitol-1-phosphate 5-dehydrogenase from Chaetomium globosum (strain ATCC 6205 / CBS 148.51 / DSM 1962 / NBRC 6347 / NRRL 1970) (Soil fungus).